The primary structure comprises 482 residues: Chitobiosyldiphosphodolichol beta-mannosyltransferase (482 aa).

Residues 1–2 (MA) lie on the Lumenal side of the membrane. A helical transmembrane segment spans residues 3–23 (ASCVALLVLALLLLVLLLGLW). The Cytoplasmic segment spans residues 24–99 (KRGRQTGRAR…DLRGLGAGPR (76 aa)). Positions 100–120 (ILQYGVKVVFQAVYLLWKMMR) form an intramembrane region, helical. Residues 121-482 (MDPAAYIFLQ…PCGHPSCRGF (362 aa)) lie on the Cytoplasmic side of the membrane. Ser242 bears the Phosphoserine mark.

The protein belongs to the glycosyltransferase group 1 family. Glycosyltransferase 33 subfamily.

The protein resides in the endoplasmic reticulum membrane. It carries out the reaction an N,N'-diacetylchitobiosyl-diphospho-di-trans,poly-cis-dolichol + GDP-alpha-D-mannose = a beta-D-Man-(1-&gt;4)-beta-D-GlcNAc-(1-&gt;4)-alpha-D-GlcNAc-diphospho-di-trans,poly-cis-dolichol + GDP + H(+). Its pathway is protein modification; protein glycosylation. In terms of biological role, mannosyltransferase that operates in the biosynthetic pathway of dolichol-linked oligosaccharides, the glycan precursors employed in protein asparagine (N)-glycosylation. The assembly of dolichol-linked oligosaccharides begins on the cytosolic side of the endoplasmic reticulum membrane and finishes in its lumen. The sequential addition of sugars to dolichol pyrophosphate produces dolichol-linked oligosaccharides containing fourteen sugars, including two GlcNAcs, nine mannoses and three glucoses. Once assembled, the oligosaccharide is transferred from the lipid to nascent proteins by oligosaccharyltransferases. Catalyzes, on the cytoplasmic face of the endoplasmic reticulum, the addition of the first mannose residues to the dolichol-linked oligosaccharide chain, to produce Man1GlcNAc(2)-PP-dolichol core oligosaccharide. Man1GlcNAc(2)-PP-dolichol is a substrate for ALG2, the following enzyme in the biosynthetic pathway. The chain is Chitobiosyldiphosphodolichol beta-mannosyltransferase from Mus musculus (Mouse).